Here is a 173-residue protein sequence, read N- to C-terminus: DNA-directed RNA polymerase subunit delta (173 aa).

The HTH HARE-type domain maps to 14-81 (MALVEIAHEL…SDQTWGLRSW (68 aa)). The disordered stretch occupies residues 110–173 (LDLDEFEEID…DYDDEEEEIK (64 aa)).

It belongs to the RpoE family. In terms of assembly, RNAP is composed of a core of 2 alpha, a beta and a beta' subunit. The core is associated with a delta subunit, and at least one of epsilon or omega. When a sigma factor is associated with the core the holoenzyme is formed, which can initiate transcription.

Participates in both the initiation and recycling phases of transcription. In the presence of the delta subunit, RNAP displays an increased specificity of transcription, a decreased affinity for nucleic acids, and an increased efficiency of RNA synthesis because of enhanced recycling. May function in sigma factor switching. It displaces RNA bound to RNA polymerase in a binary complex. The protein is DNA-directed RNA polymerase subunit delta of Bacillus subtilis (strain 168).